A 196-amino-acid chain; its full sequence is MCTARTAEEIFVETIAVKTRILNDRVLLEAARAIGDRLIAGYRAGARVFMCGNGGSAADAQHFAAELTGHLIFDRPPLGAEALHANSSHLTAVANDYDYDTVFARALEGSARPGDTLFAISTSGNSMSVLRAAKTARELGVTVVAMTGESGGQLAEFADFLINVPSRDTGRIQESHIVFIHAISEHVEHALFAPRQ.

The 159-residue stretch at 38 to 196 (LIAGYRAGAR…VEHALFAPRQ (159 aa)) folds into the SIS domain. 53–55 (NGG) is a binding site for substrate. Histidine 62 and glutamate 66 together coordinate Zn(2+). Residues glutamate 66, 95–96 (ND), 121–123 (STS), serine 126, and glutamine 173 contribute to the substrate site. Positions 173 and 181 each coordinate Zn(2+).

Belongs to the SIS family. GmhA subfamily. It depends on Zn(2+) as a cofactor.

It localises to the cytoplasm. The enzyme catalyses 2 D-sedoheptulose 7-phosphate = D-glycero-alpha-D-manno-heptose 7-phosphate + D-glycero-beta-D-manno-heptose 7-phosphate. Its pathway is carbohydrate biosynthesis; D-glycero-D-manno-heptose 7-phosphate biosynthesis; D-glycero-alpha-D-manno-heptose 7-phosphate and D-glycero-beta-D-manno-heptose 7-phosphate from sedoheptulose 7-phosphate: step 1/1. Functionally, catalyzes the isomerization of sedoheptulose 7-phosphate in D-glycero-D-manno-heptose 7-phosphate. In Mycobacterium bovis (strain ATCC BAA-935 / AF2122/97), this protein is Phosphoheptose isomerase.